The chain runs to 235 residues: Histidine/lysine/arginine/ornithine transport system permease protein HisM (235 aa).

Residues 1–26 are Periplasmic-facing; that stretch reads MIEIIQEYWKSLLWTDGYRFTGVAIT. The ABC transmembrane type-1 domain occupies 23-221; that stretch reads VAITLWLLIS…LISYVLISLF (199 aa). The chain crosses the membrane as a helical span at residues 27-47; the sequence is LWLLISSVVMGGLLAVILAVG. Over 48–58 the chain is Cytoplasmic; that stretch reads RVSSNKFIRFP. The chain crosses the membrane as a helical span at residues 59 to 79; that stretch reads IWLFTYIFRGTPLYVQLLVFY. At 80 to 104 the chain is on the periplasmic side; sequence SGMYTLEIVKGTDLLNAFFRSGLNC. Residues 105–125 traverse the membrane as a helical segment; it reads TVLALTLNTCAYTTEIFAGAI. Over 126-157 the chain is Cytoplasmic; the sequence is RSVPHGEIEAARAYGFSSFKMYRCIILPSALR. A helical membrane pass occupies residues 158–178; the sequence is IALPAYSNEVILMLHSTALAF. Topologically, residues 179–199 are periplasmic; it reads TATVPDLLKIARDINSATYQP. Residues 200-220 traverse the membrane as a helical segment; sequence FTAFGIAAVLYLLISYVLISL. Topologically, residues 221-235 are cytoplasmic; it reads FRRAERRWLQHVSSK.

It belongs to the binding-protein-dependent transport system permease family. HisMQ subfamily. In terms of assembly, the HisPMQJ complex is composed of two ATP-binding proteins (HisP), two transmembrane proteins (HisM and HisQ) and a solute-binding protein (HisJ). The HisPMQ-ArgT complex is composed of two ATP-binding proteins (HisP), two transmembrane proteins (HisM and HisQ) and a solute-binding protein (ArgT).

The protein resides in the cell inner membrane. Part of the ABC transporter complex HisPMQJ involved in histidine transport. Is also part of the ABC transporter complex HisPMQ-ArgT involved in lysine/arginine/ornithine transport. Probably responsible for the translocation of the substrate across the membrane. This chain is Histidine/lysine/arginine/ornithine transport system permease protein HisM (hisM), found in Salmonella typhi.